The chain runs to 335 residues: MDTRPLIGITMGDPASIGPEIAAKALANPEIYALCRPLLIGDSRVMARAFETTGVKLNLNPVATPAEGKYAHGTVDLIDLPVVDMGTLQWGQVQAQAGAAAFAYIKRSIELALEGAVDAVTTGPINKEALKAARIDFIGHTEIFGELTGSHDPLTMFETKGLRIFFLTRHVSLAQACRMITRDRVLDYIRRCTAALEQLGLVRPKLAVAGLNPHCGEHGLFGDEEVREIEPAVQQAQAEGYNVSGPHPADSVFWHAAQGRFDAVLSLYHDQGHIAAKMYDFERTVSITAGLPFLRSSVDHGTAFDIAGTGRASAVSLEEAIRVGAKYAAAFRRTR.

Substrate is bound by residues histidine 140 and threonine 141. 3 residues coordinate a divalent metal cation: histidine 170, histidine 214, and histidine 269. Residues lysine 277 and arginine 295 each coordinate substrate.

This sequence belongs to the PdxA family. PdxA2 subfamily. As to quaternary structure, homodimer. The cofactor is a divalent metal cation.

It catalyses the reaction 4-O-phospho-D-threonate + NAD(+) = dihydroxyacetone phosphate + CO2 + NADH. Catalyzes the NAD-dependent oxidation and subsequent decarboxylation of D-threonate 4-phosphate to produce dihydroxyacetone phosphate (DHAP). The chain is Putative D-threonate 4-phosphate dehydrogenase from Symbiobacterium thermophilum (strain DSM 24528 / JCM 14929 / IAM 14863 / T).